The primary structure comprises 92 residues: Antifungal protein B (92 aa).

The first 18 residues, 1-18 (MQITSIAIVFFAAMGAVA), serve as a signal peptide directing secretion. Positions 19–34 (NPIARESDDLDARDVQ) are excised as a propeptide. 3 disulfides stabilise this stretch: cysteine 42–cysteine 70, cysteine 49–cysteine 77, and cysteine 62–cysteine 88.

The protein localises to the secreted. It localises to the host cytoplasm. Functionally, antifungal protein that acts as an inhibitor of growth of human pathogenic molds and yeasts. Is active against the model organism Neurospora crassa, the opportunistic human pathogens Aspergillus fumigatus, Trichophyton rubrum, and Aspergillus terreus. Provokes a reduction of the incidence of infections caused by Penicillium digitatum and Penicillium italicum in oranges and by Penicillium expansum in apples. Low doses of pafB have self-inhibition activity. Also shows activity against the model yeast Saccaromyces cerevisiae and the opportunistic human pathogen Candida albicans. No antibacterial activity is observed on the Gram-negative Escherichia coli and the Gram-positive Bacillus subtilis. Finally, also shows anti-viral activity in a model of HCoV 229E infected L132 cells. The protein is Antifungal protein B of Penicillium chrysogenum (Penicillium notatum).